Consider the following 204-residue polypeptide: Large ribosomal subunit protein uL22c (204 aa).

This sequence belongs to the universal ribosomal protein uL22 family. In terms of assembly, part of the 50S ribosomal subunit.

The protein localises to the plastid. Its subcellular location is the chloroplast. Its function is as follows. This protein binds specifically to 23S rRNA. Functionally, the globular domain of the protein is located near the polypeptide exit tunnel on the outside of the subunit, while an extended beta-hairpin is found that lines the wall of the exit tunnel in the center of the 70S ribosome. The sequence is that of Large ribosomal subunit protein uL22c (rpl22) from Pisum sativum (Garden pea).